The following is a 346-amino-acid chain: Envelope glycoprotein M (346 aa).

Topologically, residues 1-12 (MALSRVDVINMR) are intravirion. A helical transmembrane segment spans residues 13-33 (IWVLSIICACLTYVNVTVHLV). Over 34 to 76 (AVHFPNLGFPCAYYEINDMKAINLSIRNDIRSLTPQLYLNPIQ) the chain is Virion surface. The helical transmembrane segment at 77 to 97 (LICYVVFMDICFFFILVYYIV) threads the bilayer. Over 98-117 (CCVKVFSSEKTPNINQSTRD) the chain is Intravirion. A helical membrane pass occupies residues 118 to 140 (ITWMGDSLSCFQFVLTMDTYQFF). Over 141-147 (VTCLSFR) the chain is Virion surface. The chain crosses the membrane as a helical span at residues 148-168 (LVTLAAFTYCLFFICFTAFTL). Residues 169–199 (TMITQYQSSERSFFVLKRIHPKLKGTIKYKT) are Intravirion-facing. Residues 200 to 220 (IIINMIELMLGFSSMVFAITI) traverse the membrane as a helical segment. Over 221 to 236 (CLGLGNNFYIKSSTVA) the chain is Virion surface. The helical transmembrane segment at 237 to 257 (FASINTFFVMSFVYSLVIELI) threads the bilayer. Residues 258–263 (LHQYVK) are Intravirion-facing. Residues 264-284 (VQFGLHFGILFGILGLTYPIL) form a helical membrane-spanning segment. At 285 to 293 (KYDSLFKTE) the chain is on the virion surface side. A helical membrane pass occupies residues 294–314 (WTVKFIVNLAVITIVCLSFII). Residues 315–346 (CRLIRFFMRKHHNYKKLPTTVEDLDVLEEANE) lie on the Intravirion side of the membrane.

The protein belongs to the herpesviridae glycoprotein M family. Interacts (via N-terminus) with gN (via N-terminus). The gM-gN heterodimer forms the gCII complex.

The protein localises to the virion membrane. It is found in the host Golgi apparatus. The protein resides in the host trans-Golgi network. It localises to the host endosome membrane. Its subcellular location is the host nucleus inner membrane. In terms of biological role, envelope glycoprotein important for virion assembly and egress. Plays a role in the correct incorporation of gH-gL into virion membrane. Directs the glycoprotein N (gN) to the host trans-Golgi network. The protein is Envelope glycoprotein M of Homo sapiens (Human).